We begin with the raw amino-acid sequence, 816 residues long: Phosphatidylinositol 4-kinase beta (816 aa).

Disordered stretches follow at residues 1-30 (MGDMVVEPATLKPTSEPTPSPSGNNGGSLL), 101-120 (EDEMGAGVASGTAKGARRRR), and 250-318 (RKRE…SFSS). Gly2 carries the N-acetylglycine modification. The tract at residues 2 to 68 (GDMVVEPATL…VKLLHGGVAI (67 aa)) is interaction with ACBD3. A compositionally biased stretch (low complexity) spans 10-30 (TLKPTSEPTPSPSGNNGGSLL). A PIK helical domain is found at 52 to 242 (CQEVLEKVKL…GTKLRKLILS (191 aa)). Ser258 carries the phosphoserine modification. Thr263 carries the phosphothreonine modification. Ser266, Ser275, Ser277, Ser284, and Ser294 each carry phosphoserine. Composition is skewed to polar residues over residues 278-297 (DATASISLSSNLKRTASNPK) and 306-318 (SSSTESIDNSFSS). Ser428 bears the Phosphoserine mark. Thr438 carries the phosphothreonine modification. Residue Ser511 is modified to Phosphoserine. Phosphothreonine occurs at positions 517 and 519. The region spanning 535–801 (EPWQEKVRRI…MVDGSMRSIT (267 aa)) is the PI3K/PI4K catalytic domain. The interval 541–547 (VRRIREG) is G-loop. The tract at residues 668 to 676 (QVKDRHNGN) is catalytic loop. The interval 687–711 (HIDFGFILSSSPRNLGFETSAFKLT) is activation loop.

This sequence belongs to the PI3/PI4-kinase family. Type III PI4K subfamily. Interacts with ARF1 and ARF3 in the Golgi complex, but not with ARF4, ARF5 or ARF6. Interacts with NCS1/FREQ in a calcium-independent manner. Interacts with CALN1/CABP8 and CALN2/CABP7; in a calcium-dependent manner; this interaction competes with NCS1/FREQ binding. Interacts with ACBD3. Interacts with ARMH3, YWHAB, YWHAE, YWHAG, YWHAH, YWHAQ, YWHAZ and SFN. Interacts with GGA2 (via VHS domain); the interaction is important for PI4KB location at the Golgi apparatus membrane. Interacts with ATG9A. The cofactor is Mg(2+). Mn(2+) serves as cofactor.

It localises to the endomembrane system. The protein resides in the mitochondrion outer membrane. The protein localises to the rough endoplasmic reticulum membrane. It is found in the golgi apparatus. Its subcellular location is the golgi apparatus membrane. The enzyme catalyses a 1,2-diacyl-sn-glycero-3-phospho-(1D-myo-inositol) + ATP = a 1,2-diacyl-sn-glycero-3-phospho-(1D-myo-inositol 4-phosphate) + ADP + H(+). Its activity is regulated as follows. Inhibited by wortmannin. Increased kinase activity upon interaction with NCS1/FREQ. Phosphorylates phosphatidylinositol (PI) in the first committed step in the production of the second messenger inositol-1,4,5,-trisphosphate (PIP). May regulate Golgi disintegration/reorganization during mitosis, possibly via its phosphorylation. Involved in Golgi-to-plasma membrane trafficking. May play an important role in the inner ear development. In Mus musculus (Mouse), this protein is Phosphatidylinositol 4-kinase beta (Pi4kb).